We begin with the raw amino-acid sequence, 207 residues long: Guanylate kinase (207 aa).

Residues glycine 4–arginine 184 enclose the Guanylate kinase-like domain. Alanine 11–serine 18 is an ATP binding site.

It belongs to the guanylate kinase family.

The protein localises to the cytoplasm. The enzyme catalyses GMP + ATP = GDP + ADP. Essential for recycling GMP and indirectly, cGMP. The protein is Guanylate kinase of Photorhabdus laumondii subsp. laumondii (strain DSM 15139 / CIP 105565 / TT01) (Photorhabdus luminescens subsp. laumondii).